Reading from the N-terminus, the 336-residue chain is Holliday junction branch migration complex subunit RuvB (336 aa).

The large ATPase domain (RuvB-L) stretch occupies residues Ala4–Tyr184. Residues Ile23, Arg24, Gly65, Lys68, Thr69, Thr70, Glu131–Tyr133, Arg174, Tyr184, and Arg221 contribute to the ATP site. Residue Thr69 coordinates Mg(2+). The tract at residues Gln185 to Asn255 is small ATPAse domain (RuvB-S). Residues Ala258–Pro336 form a head domain (RuvB-H) region. DNA-binding residues include Arg294, Arg313, and Arg318.

It belongs to the RuvB family. As to quaternary structure, homohexamer. Forms an RuvA(8)-RuvB(12)-Holliday junction (HJ) complex. HJ DNA is sandwiched between 2 RuvA tetramers; dsDNA enters through RuvA and exits via RuvB. An RuvB hexamer assembles on each DNA strand where it exits the tetramer. Each RuvB hexamer is contacted by two RuvA subunits (via domain III) on 2 adjacent RuvB subunits; this complex drives branch migration. In the full resolvosome a probable DNA-RuvA(4)-RuvB(12)-RuvC(2) complex forms which resolves the HJ.

Its subcellular location is the cytoplasm. It carries out the reaction ATP + H2O = ADP + phosphate + H(+). Functionally, the RuvA-RuvB-RuvC complex processes Holliday junction (HJ) DNA during genetic recombination and DNA repair, while the RuvA-RuvB complex plays an important role in the rescue of blocked DNA replication forks via replication fork reversal (RFR). RuvA specifically binds to HJ cruciform DNA, conferring on it an open structure. The RuvB hexamer acts as an ATP-dependent pump, pulling dsDNA into and through the RuvAB complex. RuvB forms 2 homohexamers on either side of HJ DNA bound by 1 or 2 RuvA tetramers; 4 subunits per hexamer contact DNA at a time. Coordinated motions by a converter formed by DNA-disengaged RuvB subunits stimulates ATP hydrolysis and nucleotide exchange. Immobilization of the converter enables RuvB to convert the ATP-contained energy into a lever motion, pulling 2 nucleotides of DNA out of the RuvA tetramer per ATP hydrolyzed, thus driving DNA branch migration. The RuvB motors rotate together with the DNA substrate, which together with the progressing nucleotide cycle form the mechanistic basis for DNA recombination by continuous HJ branch migration. Branch migration allows RuvC to scan DNA until it finds its consensus sequence, where it cleaves and resolves cruciform DNA. The chain is Holliday junction branch migration complex subunit RuvB from Shigella boydii serotype 18 (strain CDC 3083-94 / BS512).